We begin with the raw amino-acid sequence, 462 residues long: tRNA(Ile)-lysidine synthase (462 aa).

27 to 32 (SGGPDS) is a binding site for ATP.

This sequence belongs to the tRNA(Ile)-lysidine synthase family.

It is found in the cytoplasm. The catalysed reaction is cytidine(34) in tRNA(Ile2) + L-lysine + ATP = lysidine(34) in tRNA(Ile2) + AMP + diphosphate + H(+). Ligates lysine onto the cytidine present at position 34 of the AUA codon-specific tRNA(Ile) that contains the anticodon CAU, in an ATP-dependent manner. Cytidine is converted to lysidine, thus changing the amino acid specificity of the tRNA from methionine to isoleucine. This chain is tRNA(Ile)-lysidine synthase, found in Clostridioides difficile (strain 630) (Peptoclostridium difficile).